The chain runs to 278 residues: DNA repair protein RecO (278 aa).

The span at 1 to 12 (MGTNDALTSTED) shows a compositional bias: polar residues. The tract at residues 1-42 (MGTNDALTSTEDAVTAGANDAPLPAPPEPPRKARRATSRTSD) is disordered.

The protein belongs to the RecO family.

Its function is as follows. Involved in DNA repair and RecF pathway recombination. The protein is DNA repair protein RecO of Burkholderia lata (strain ATCC 17760 / DSM 23089 / LMG 22485 / NCIMB 9086 / R18194 / 383).